The following is a 615-amino-acid chain: RUN domain-containing protein 1 (615 aa).

Residues 15-41 (TAVGPKAKDEEEEEEEEESLPPCETVR) are disordered. Over residues 24-33 (EEEEEEEEES) the composition is skewed to acidic residues. Serine 73 carries the phosphoserine modification. Coiled coils occupy residues 76–102 (DATV…LSSH) and 163–238 (RVRG…NLNE). The disordered stretch occupies residues 147-180 (DPCGGDESDVLPGDRPRVRGEDQSEQEKRERLET). Basic and acidic residues predominate over residues 158–180 (PGDRPRVRGEDQSEQEKRERLET). The 182-residue stretch at 423-604 (ELTTVVRKEL…LKFSLPVDLA (182 aa)) folds into the RUN domain. Residue serine 499 is modified to Phosphoserine.

May play a role as p53/TP53 inhibitor and thus may have oncogenic activity. This Mus musculus (Mouse) protein is RUN domain-containing protein 1 (Rundc1).